Reading from the N-terminus, the 525-residue chain is 2,3-bisphosphoglycerate-independent phosphoglycerate mutase 2 (525 aa).

The Mn(2+) site is built by Asp14 and Ser64. Residue Ser64 is the Phosphoserine intermediate of the active site. Residues His125, 155–156 (RD), Arg187, Arg193, 274–277 (RADR), and Lys347 contribute to the substrate site. Asp414, His418, Asp455, His456, and His474 together coordinate Mn(2+).

The protein belongs to the BPG-independent phosphoglycerate mutase family. The cofactor is Mn(2+).

It carries out the reaction (2R)-2-phosphoglycerate = (2R)-3-phosphoglycerate. The protein operates within carbohydrate degradation; glycolysis; pyruvate from D-glyceraldehyde 3-phosphate: step 3/5. In terms of biological role, catalyzes the interconversion of 2-phosphoglycerate and 3-phosphoglycerate. The polypeptide is 2,3-bisphosphoglycerate-independent phosphoglycerate mutase 2 (Methanosarcina barkeri (strain Fusaro / DSM 804)).